The sequence spans 321 residues: Probable UDP-sugar transporter protein SLC35A4 (321 aa).

Residues 1–22 (MYSVNIEPDGSNHSPSRKRLKQ) are Cytoplasmic-facing. The helical transmembrane segment at 23–43 (ILWGLMLVLSVTIYGSHAPLI) threads the bilayer. The Lumenal segment spans residues 44–56 (YLCKVNGEIPFSS). The helical transmembrane segment at 57–77 (SAVVLLIELSKFVISLVFFLI) threads the bilayer. The Cytoplasmic portion of the chain corresponds to 78-91 (QDWKSLKASVSWHL). The helical transmembrane segment at 92–112 (AAPYAVPAVLYGANNNLVVYI) threads the bilayer. Residues 113–119 (QHFMDPS) are Lumenal-facing. Residues 120–140 (SFQVLSNLKIVSTAVLYSLFL) traverse the membrane as a helical segment. The Cytoplasmic portion of the chain corresponds to 141-149 (RQRLSVRRW). The chain crosses the membrane as a helical span at residues 150 to 170 (LSVFLLLAAGVFYSYGGIQDL). The Lumenal segment spans residues 171-180 (EKVSSDTNLY). The chain crosses the membrane as a helical span at residues 181 to 201 (VTLPGLLLMLAYCLISGLSAV). Residues 202–211 (YTEMTLKTQK) are Cytoplasmic-facing. A helical transmembrane segment spans residues 212–232 (IPLNMQNLYLYSFGIIINLTA). The Lumenal segment spans residues 233-247 (HLTSSKNSDFFDGFS). Residues 248-268 (VWVWVIILSQALNGLIMSLVM) traverse the membrane as a helical segment. The Cytoplasmic segment spans residues 269–321 (KLSNNITRLFIISFSMLANGFLSFILFQLQLTALFFLAVVLIGLAVYMYYGMK).

This sequence belongs to the nucleotide-sugar transporter family. SLC35A subfamily.

Its subcellular location is the golgi apparatus membrane. It catalyses the reaction CDP-L-ribitol(in) + CDP(out) = CDP-L-ribitol(out) + CDP(in). Functionally, mediates the transport of CDP-ribitol. Does not exhibit CMP-sialic acid, UDP-galactose and UDP-N-acetylglucosamine transport activity. The sequence is that of Probable UDP-sugar transporter protein SLC35A4 from Xenopus tropicalis (Western clawed frog).